The primary structure comprises 877 residues: Transcriptional corepressor SEUSS (877 aa).

Disordered regions lie at residues 1 to 42 (MVPS…VSPR) and 272 to 295 (LKSMPQQRPQLPQQFQQQNLPLRP). Residues 272–292 (LKSMPQQRPQLPQQFQQQNLP) show a composition bias toward low complexity. Residues 321 to 563 (PEDNNIEFWR…ETRTGPIESL (243 aa)) form a dimerization region. The Nuclear localization signal motif lies at 330–344 (RKFVAEYFAPNAKKR). Disordered regions lie at residues 560 to 599 (IESLAKFPRRTGPSSALPGPSPQQASDQLRQQQQQQQQQQ), 612 to 633 (QQTVSQNTNSDQSSRQVALMQG), and 666 to 753 (GRHQ…NESS). Residues 582–618 (QQASDQLRQQQQQQQQQQQQQQQQQQQQQQQQTVSQN) are a coiled coil. Low complexity predominate over residues 590–599 (QQQQQQQQQQ). The segment covering 614–633 (TVSQNTNSDQSSRQVALMQG) has biased composition (polar residues). Low complexity-rich tracts occupy residues 688-703 (QSPSSSGTMVPSSSQQ) and 711-725 (QSPTSSSNNNNPSQN). The span at 726 to 741 (GIPSVNHMGSTNSPAM) shows a compositional bias: polar residues.

It belongs to the adn1/SEU family. Forms a corepressor complex with LUG; LUG is the transcription repressor subunit and SEU the specific DNA-binding adapter. Interacts with AGL24-AP1 and SVP-AP1 dimers when complexed to SEU. Interacts with AP1/AGL7 and SEP3/AGL9. Binds to LUH. In terms of tissue distribution, expressed in root, leaves, seedlings, vegetative and reproductive shoot apical meristems, seeds, floral meristems and all floral organs.

It is found in the nucleus. The protein localises to the nucleoplasm. Its function is as follows. DNA-binding adapter subunit of the SEU-LUG transcriptional corepressor of the C class floral homeotic gene AGAMOUS during the early stages of floral meristem development. Is part of the A class cadastral complex that define the boundaries between the A and C class homeotic genes expression and function. Interacts together with APETALA2 and LEUNIG to repress AGAMOUS expression. In association with LUG, regulates petal shape through AGAMOUS-independent mechanisms. Controls cell division during petal development and enable the proper patterning of petal blade vasculature. Required for the proper elaboration of petal polarity along the adaxial/abaxial axis. May act through direct or indirect regulation of PHABULOSA and YAB1 and thus regulate cellular proliferation within the developing petal blade. In association with AINTEGUMENTA (ANT), coordinates patterning cues and cellular proliferation along the three positional axes of the developing gynoecium. Required for the development of the medial ridge and subsequent ovule initiation. This is Transcriptional corepressor SEUSS (SEU) from Arabidopsis thaliana (Mouse-ear cress).